The chain runs to 115 residues: uncharacterized protein (115 aa).

It belongs to the transposase 34 family.

This is an uncharacterized protein from Sinorhizobium fredii (strain NBRC 101917 / NGR234).